Reading from the N-terminus, the 351-residue chain is Ribosomal RNA large subunit methyltransferase M (351 aa).

S-adenosyl-L-methionine-binding positions include Ser186, 219–222 (APGG), Asp238, Asp258, and Asp274. Residue Lys303 is the Proton acceptor of the active site.

Belongs to the class I-like SAM-binding methyltransferase superfamily. RNA methyltransferase RlmE family. RlmM subfamily. Monomer.

Its subcellular location is the cytoplasm. The catalysed reaction is cytidine(2498) in 23S rRNA + S-adenosyl-L-methionine = 2'-O-methylcytidine(2498) in 23S rRNA + S-adenosyl-L-homocysteine + H(+). Its function is as follows. Catalyzes the 2'-O-methylation at nucleotide C2498 in 23S rRNA. The chain is Ribosomal RNA large subunit methyltransferase M from Xylella fastidiosa (strain 9a5c).